The primary structure comprises 503 residues: Probable DNA ligase (503 aa).

Residue glutamate 210 participates in ATP binding. The active-site N6-AMP-lysine intermediate is lysine 212. Residues arginine 217, arginine 232, glutamate 261, phenylalanine 296, arginine 367, and lysine 373 each coordinate ATP.

It belongs to the ATP-dependent DNA ligase family. It depends on Mg(2+) as a cofactor.

The enzyme catalyses ATP + (deoxyribonucleotide)n-3'-hydroxyl + 5'-phospho-(deoxyribonucleotide)m = (deoxyribonucleotide)n+m + AMP + diphosphate.. DNA ligase that seals nicks in double-stranded DNA during DNA replication, DNA recombination and DNA repair. This chain is Probable DNA ligase, found in Rhodococcus jostii (strain RHA1).